Here is a 146-residue protein sequence, read N- to C-terminus: Hemoglobin subunit beta-1/2 (146 aa).

Val-1 is subject to N-acetylvaline. A Globin domain is found at 2–146 (HLTGEEKSGL…VANALAHKYH (145 aa)). Thr-12 is modified (phosphothreonine). Lys-59 bears the N6-acetyllysine mark. His-63 lines the heme b pocket. Residue Lys-82 is modified to N6-acetyllysine. His-92 is a heme b binding site. Cys-93 is modified (S-nitrosocysteine). Lys-144 bears the N6-acetyllysine mark.

Belongs to the globin family. In terms of assembly, heterotetramer of two alpha chains and two beta chains. Red blood cells.

Its function is as follows. Involved in oxygen transport from the lung to the various peripheral tissues. This is Hemoglobin subunit beta-1/2 (HBB) from Physeter macrocephalus (Sperm whale).